The sequence spans 162 residues: Cytochrome B pre-mRNA-processing protein 6 (162 aa).

An N-acetylserine modification is found at serine 2. A Phosphothreonine modification is found at threonine 97.

It is found in the mitochondrion. Functionally, this protein is involved in processing of the 5' terminus and the intervening sequences of cytochrome b pre-mRNA. This is Cytochrome B pre-mRNA-processing protein 6 (CBP6) from Saccharomyces cerevisiae (strain ATCC 204508 / S288c) (Baker's yeast).